The chain runs to 342 residues: Sorting nexin-15 (342 aa).

The 130-residue stretch at 1–130 (MSRQAKDDFL…EFFRGGEVTR (130 aa)) folds into the PX domain. A 1,2-diacyl-sn-glycero-3-phospho-(1D-myo-inositol-3-phosphate)-binding residues include Arg51, Ser53, Arg87, and Arg96. Arg105 carries the post-translational modification Omega-N-methylarginine. Phosphoserine is present on residues Ser201 and Ser227. Residues 245-267 (DQEPWEPGGQEEEEDGEGGPTPA) form a disordered region. The region spanning 265 to 342 (TPAYLSQATE…LRLHLSQLPP (78 aa)) is the MIT domain.

This sequence belongs to the sorting nexin family. As to quaternary structure, homodimer. Interacts with SNX1, SNX2 and SNX4. In terms of tissue distribution, widely expressed.

It localises to the cytoplasm. The protein resides in the membrane. The protein localises to the cytoplasmic vesicle membrane. Functionally, may be involved in several stages of intracellular trafficking. Overexpression of SNX15 disrupts the normal trafficking of proteins from the plasma membrane to recycling endosomes or the TGN. The protein is Sorting nexin-15 (SNX15) of Homo sapiens (Human).